A 611-amino-acid chain; its full sequence is UvrABC system protein C (611 aa).

The GIY-YIG domain occupies 6-84; that stretch reads NNPGVYRMFN…IKRSRPRFNV (79 aa). Residues 194–229 enclose the UVR domain; it reads QSVKDHLAAAMQAASADLDFEHAAVYRDRLAALSHV.

It belongs to the UvrC family. In terms of assembly, interacts with UvrB in an incision complex.

The protein localises to the cytoplasm. The UvrABC repair system catalyzes the recognition and processing of DNA lesions. UvrC both incises the 5' and 3' sides of the lesion. The N-terminal half is responsible for the 3' incision and the C-terminal half is responsible for the 5' incision. In Brucella suis biovar 1 (strain 1330), this protein is UvrABC system protein C.